Consider the following 214-residue polypeptide: Pyridoxine/pyridoxamine 5'-phosphate oxidase (214 aa).

Substrate-binding positions include 9 to 12 (RKSY) and K67. FMN contacts are provided by residues 62–67 (RIVLLK), 77–78 (YT), R83, K84, and Q106. Residues Y124, R128, and S132 each contribute to the substrate site. FMN-binding positions include 141-142 (QS) and W186. 192–194 (RLH) is a binding site for substrate. R196 serves as a coordination point for FMN.

The protein belongs to the pyridoxamine 5'-phosphate oxidase family. In terms of assembly, homodimer. FMN serves as cofactor.

It catalyses the reaction pyridoxamine 5'-phosphate + O2 + H2O = pyridoxal 5'-phosphate + H2O2 + NH4(+). The catalysed reaction is pyridoxine 5'-phosphate + O2 = pyridoxal 5'-phosphate + H2O2. Its pathway is cofactor metabolism; pyridoxal 5'-phosphate salvage; pyridoxal 5'-phosphate from pyridoxamine 5'-phosphate: step 1/1. The protein operates within cofactor metabolism; pyridoxal 5'-phosphate salvage; pyridoxal 5'-phosphate from pyridoxine 5'-phosphate: step 1/1. In terms of biological role, catalyzes the oxidation of either pyridoxine 5'-phosphate (PNP) or pyridoxamine 5'-phosphate (PMP) into pyridoxal 5'-phosphate (PLP). This Leptospira interrogans serogroup Icterohaemorrhagiae serovar copenhageni (strain Fiocruz L1-130) protein is Pyridoxine/pyridoxamine 5'-phosphate oxidase.